The chain runs to 242 residues: Carbendazim hydrolyzing esterase (242 aa).

Ser77 serves as the catalytic Acyl-ester intermediate.

The protein belongs to the AB hydrolase superfamily.

It localises to the secreted. The catalysed reaction is carbendazim + H2O = 2-aminobenzimidazole + methanol + CO2. The enzyme catalyses carbendazim + H2O = N-(1H-1,3-benzodiazol-2-yl)carbamate + methanol + H(+). It carries out the reaction N-(1H-1,3-benzodiazol-2-yl)carbamate + H(+) = 2-aminobenzimidazole + CO2. Functionally, catalyzes the hydrolysis of the fungicide carbendazim (methyl-1H-benzimidazol-2-ylcarbamate or MBC) to 2-aminobenzimidazole (2-AB). Following hydrolysis of the carbamate ester, the carbamate decarboxylates spontaneously. Can hydrolyze model carboxylesters such as methyl salicylate, alpha-naphthyl acetate and p-nitrophenyl acetate. In addition, shows substantial hydrolytic activity in vitro against widespread pollutants with carboxylester, carbamate and amide linkages, such as dimethyl phthalate, propanil and chlorpropham. This is Carbendazim hydrolyzing esterase from Nocardioides sp. (strain SG-4G).